Here is a 317-residue protein sequence, read N- to C-terminus: MLSLDYNNIFIYELLTERFSSENPSSIDQVVTDFDGVTFHISTPEEKTKILISLSMKCYPELVNYGTLDLLKQIYGAYVHEPEMGYNFSILIDLQQLPATDEEKEQLAMSISMLKRNVLAAPFHRAFTKQAELADLARKDPENAPMLDKQATSQELMAIHYRDEETIVLWPEHDRVTVVFSTKFREETDRIFGKVFLQEFVDARRRPAIQTAPQVLFSYRDPPLEIRDIQGIQKGDDFGFVTFVLFERHFTPQNREDCISHIQVFRNTLHFHIKASKAYMHQRMRKRVADFQKVLNRAKPDVELERKTATGRSFVRA.

This sequence belongs to the ARPC2 family. Component of the Arp2/3 complex composed of arp2, act2, arc1/p41-ARC, arc2/p34-ARC, arc3/p21-ARC, arc4/p20-ARC and arc5/p16-ARC.

The protein resides in the cytoplasm. The protein localises to the cytoskeleton. It is found in the actin patch. Its function is as follows. Functions as actin-binding component of the Arp2/3 complex which is involved in regulation of actin polymerization and together with an activating nucleation-promoting factor (NPF) mediates the formation of branched actin networks. Seems to contact the mother actin filament. In Schizosaccharomyces pombe (strain 972 / ATCC 24843) (Fission yeast), this protein is Actin-related protein 2/3 complex subunit 2 (arc2).